A 152-amino-acid chain; its full sequence is Mid1-interacting protein 1A (152 aa).

Basic and acidic residues predominate over residues 87-105; it reads SEDQRRKKDTSASEPVRTE. The segment at 87–109 is disordered; that stretch reads SEDQRRKKDTSASEPVRTEEESD.

The protein belongs to the SPOT14 family. In terms of tissue distribution, expressed for a short period in the cells that will produce the enveloping layer (EVL).

It is found in the nucleus. Its subcellular location is the cytoplasm. The protein resides in the cytoskeleton. Functionally, involved in stabilization of microtubules. May play a role in the regulation of lipogenesis. In Danio rerio (Zebrafish), this protein is Mid1-interacting protein 1A (mid1ip1a).